A 269-amino-acid chain; its full sequence is Zinc transporter ZupT (269 aa).

The next 8 membrane-spanning stretches (helical) occupy residues 5–25, 38–58, 75–95, 125–145, 158–178, 190–210, 212–232, and 249–269; these read VLLAFGLTLFAGLATGVGSLI, SLALGFSAGVMIYVSLVEIFV, WMTIAGFFGGMLFIALIDKFI, MGIFTALAIGIHNFPEGIATF, IAIAVAIHNIPEGIAVSVPIF, LSFLSGLAEPVGALVAFLLLM, FLTDVMFGIIFAGVAGIMVFI, and LSMYGLVGGMAVMAISLVLLV. Asn137 and Glu140 together coordinate Fe(2+). Glu140 and His165 together coordinate Zn(2+). Residues Asn166, Glu169, and Glu198 each contribute to the Fe(2+) site. Glu169 serves as a coordination point for Zn(2+).

Belongs to the ZIP transporter (TC 2.A.5) family. ZupT subfamily.

The protein localises to the cell membrane. The catalysed reaction is Zn(2+)(in) = Zn(2+)(out). Mediates zinc uptake. May also transport other divalent cations. The protein is Zinc transporter ZupT of Lysinibacillus sphaericus (strain C3-41).